Reading from the N-terminus, the 226-residue chain is Putative ABC transporter ATP-binding protein BH02760 (226 aa).

Positions 4-222 (IKFDKVTQVF…IPLVAIKEYI (219 aa)) constitute an ABC transporter domain. An ATP-binding site is contributed by 35–42 (GANGSGKS).

It belongs to the ABC transporter superfamily.

It is found in the cell inner membrane. In terms of biological role, probably part of an ABC transporter complex. Responsible for energy coupling to the transport system. The chain is Putative ABC transporter ATP-binding protein BH02760 from Bartonella henselae (strain ATCC 49882 / DSM 28221 / CCUG 30454 / Houston 1) (Rochalimaea henselae).